The chain runs to 356 residues: GDP-mannose 4,6 dehydratase (356 aa).

NADP(+)-binding positions include 12 to 17 (GITGQD), 69 to 70 (DL), 91 to 95 (LGAQS), and tyrosine 106. Threonine 138 is an active-site residue. Active-site nucleophile residues include glutamate 140 and tyrosine 162. The NADP(+) site is built by lysine 166, histidine 192, and arginine 197.

Belongs to the NAD(P)-dependent epimerase/dehydratase family. GDP-mannose 4,6-dehydratase subfamily. Requires NADP(+) as cofactor.

The enzyme catalyses GDP-alpha-D-mannose = GDP-4-dehydro-alpha-D-rhamnose + H2O. The protein operates within nucleotide-sugar biosynthesis; GDP-L-fucose biosynthesis via de novo pathway; GDP-L-fucose from GDP-alpha-D-mannose: step 1/2. In terms of biological role, participates in the synthesis of GDP-L-fucose, catalyzing the conversion of GDP-D-mannose to GDP-4-dehydro-6-deoxy-D-mannose (GDP-4-dehydro-alpha-D-rhamnose) which is further catalyzed by GDP-L-fucose synthase (ger). GDP-L-fucose is important for the synthesis of fucosylated N-glycans which are expressed on the cell surface. This Dictyostelium discoideum (Social amoeba) protein is GDP-mannose 4,6 dehydratase (gmd).